Here is a 151-residue protein sequence, read N- to C-terminus: Cell division protein SepF (151 aa).

It belongs to the SepF family. Homodimer. Interacts with FtsZ.

It is found in the cytoplasm. Cell division protein that is part of the divisome complex and is recruited early to the Z-ring. Probably stimulates Z-ring formation, perhaps through the cross-linking of FtsZ protofilaments. Its function overlaps with FtsA. In Desulfitobacterium hafniense (strain Y51), this protein is Cell division protein SepF.